A 358-amino-acid chain; its full sequence is Pre-mRNA-splicing factor spp2 (358 aa).

Disordered stretches follow at residues 1-250 (MTDQ…RAVP) and 298-358 (AWNQ…RGDR). Residues 24–40 (KTKKPSRPTHTRRHHAR) show a composition bias toward basic residues. Basic and acidic residues-rich tracts occupy residues 80 to 137 (LENR…DASR) and 145 to 160 (RSRDRDHKPKDPKDLQ). The segment covering 174–185 (NPKSTTTATSSF) has biased composition (polar residues). 2 stretches are compositionally biased toward basic and acidic residues: residues 233–246 (SSHDRDRSPDHSDY) and 309–358 (GDSR…RGDR).

It belongs to the SPP2 family. Associated with the spliceosome.

The protein localises to the nucleus. Functionally, involved in spliceosome maturation and the first step of pre-mRNA splicing. This chain is Pre-mRNA-splicing factor spp2 (msp-40), found in Neurospora crassa (strain ATCC 24698 / 74-OR23-1A / CBS 708.71 / DSM 1257 / FGSC 987).